Consider the following 266-residue polypeptide: Imidazole glycerol phosphate synthase subunit HisF (266 aa).

Active-site residues include aspartate 11 and aspartate 130.

This sequence belongs to the HisA/HisF family. Heterodimer of HisH and HisF.

It localises to the cytoplasm. It carries out the reaction 5-[(5-phospho-1-deoxy-D-ribulos-1-ylimino)methylamino]-1-(5-phospho-beta-D-ribosyl)imidazole-4-carboxamide + L-glutamine = D-erythro-1-(imidazol-4-yl)glycerol 3-phosphate + 5-amino-1-(5-phospho-beta-D-ribosyl)imidazole-4-carboxamide + L-glutamate + H(+). The protein operates within amino-acid biosynthesis; L-histidine biosynthesis; L-histidine from 5-phospho-alpha-D-ribose 1-diphosphate: step 5/9. Its function is as follows. IGPS catalyzes the conversion of PRFAR and glutamine to IGP, AICAR and glutamate. The HisF subunit catalyzes the cyclization activity that produces IGP and AICAR from PRFAR using the ammonia provided by the HisH subunit. This Delftia acidovorans (strain DSM 14801 / SPH-1) protein is Imidazole glycerol phosphate synthase subunit HisF.